The primary structure comprises 338 residues: L-asparaginase 1 (338 aa).

In terms of domain architecture, Asparaginase/glutaminase spans 4-329 (KSIYVAYTGG…ETIRKAMSQN (326 aa)). Thr-14 functions as the O-isoaspartyl threonine intermediate in the catalytic mechanism. Substrate contacts are provided by residues 59–61 (DSS) and 91–92 (TD).

This sequence belongs to the asparaginase 1 family. In terms of assembly, homotetramer.

The protein localises to the cytoplasm. It catalyses the reaction L-asparagine + H2O = L-aspartate + NH4(+). This is L-asparaginase 1 (ansA) from Escherichia coli O157:H7.